Reading from the N-terminus, the 341-residue chain is Tyrosine recombinase XerC (341 aa).

The region spanning 14-105 (PDAAEALERW…GVRSFFRWAD (92 aa)) is the Core-binding (CB) domain. The region spanning 126-309 (PLPRPLAADD…DAEHLLSVYE (184 aa)) is the Tyr recombinase domain. Catalysis depends on residues arginine 169, lysine 193, histidine 261, arginine 264, and histidine 287. Tyrosine 296 functions as the O-(3'-phospho-DNA)-tyrosine intermediate in the catalytic mechanism.

Belongs to the 'phage' integrase family. XerC subfamily. In terms of assembly, forms a cyclic heterotetrameric complex composed of two molecules of XerC and two molecules of XerD.

The protein localises to the cytoplasm. Functionally, site-specific tyrosine recombinase, which acts by catalyzing the cutting and rejoining of the recombining DNA molecules. The XerC-XerD complex is essential to convert dimers of the bacterial chromosome into monomers to permit their segregation at cell division. It also contributes to the segregational stability of plasmids. This is Tyrosine recombinase XerC from Rhodospirillum centenum (strain ATCC 51521 / SW).